Consider the following 488-residue polypeptide: Protein nucleotidyltransferase YdiU (488 aa).

The ATP site is built by G91, G93, R94, K114, D126, G127, R177, and R184. The active-site Proton acceptor is the D253. Mg(2+)-binding residues include N254 and D263. Position 263 (D263) interacts with ATP.

The protein belongs to the SELO family. Mg(2+) is required as a cofactor. Requires Mn(2+) as cofactor.

It carries out the reaction L-seryl-[protein] + ATP = 3-O-(5'-adenylyl)-L-seryl-[protein] + diphosphate. It catalyses the reaction L-threonyl-[protein] + ATP = 3-O-(5'-adenylyl)-L-threonyl-[protein] + diphosphate. The catalysed reaction is L-tyrosyl-[protein] + ATP = O-(5'-adenylyl)-L-tyrosyl-[protein] + diphosphate. The enzyme catalyses L-histidyl-[protein] + UTP = N(tele)-(5'-uridylyl)-L-histidyl-[protein] + diphosphate. It carries out the reaction L-seryl-[protein] + UTP = O-(5'-uridylyl)-L-seryl-[protein] + diphosphate. It catalyses the reaction L-tyrosyl-[protein] + UTP = O-(5'-uridylyl)-L-tyrosyl-[protein] + diphosphate. Its function is as follows. Nucleotidyltransferase involved in the post-translational modification of proteins. It can catalyze the addition of adenosine monophosphate (AMP) or uridine monophosphate (UMP) to a protein, resulting in modifications known as AMPylation and UMPylation. This is Protein nucleotidyltransferase YdiU from Bacillus cereus (strain ATCC 10987 / NRS 248).